Here is a 162-residue protein sequence, read N- to C-terminus: Calcium vector protein (162 aa).

An N-acetylalanine modification is found at alanine 2. EF-hand domains follow at residues 12 to 47 (EEKD…LGQT), 49 to 84 (TKRE…KWVR), 86 to 121 (DDEE…VGEE), and 123 to 158 (LTDA…SKNA). Lysine 96 is subject to N6,N6,N6-trimethyllysine. Positions 99, 101, 103, and 110 each coordinate Ca(2+). Lysine 117 carries the post-translational modification N6,N6,N6-trimethyllysine. Aspartate 136, aspartate 138, asparagine 140, and glutamate 147 together coordinate Ca(2+).

Its subcellular location is the cytoplasm. The exact function of this protein is not yet known. It interacts with CAVPT, a protein also of unknown function, in a calcium-dependent way. This protein binds two calcium ions. This chain is Calcium vector protein, found in Branchiostoma lanceolatum (Common lancelet).